A 497-amino-acid polypeptide reads, in one-letter code: Glycerol kinase (497 aa).

Residue Thr-13 participates in ADP binding. 3 residues coordinate ATP: Thr-13, Thr-14, and Ser-15. Residue Thr-13 coordinates sn-glycerol 3-phosphate. Residue Arg-17 participates in ADP binding. 3 residues coordinate sn-glycerol 3-phosphate: Arg-83, Glu-84, and Tyr-135. Glycerol is bound by residues Arg-83, Glu-84, and Tyr-135. A Phosphohistidine; by HPr modification is found at His-231. Asp-245 is a binding site for sn-glycerol 3-phosphate. Residues Asp-245 and Gln-246 each coordinate glycerol. The ADP site is built by Thr-267 and Gly-310. Thr-267, Gly-310, Gln-314, and Gly-411 together coordinate ATP. ADP-binding residues include Gly-411 and Asn-415.

Belongs to the FGGY kinase family. Homotetramer and homodimer (in equilibrium). Post-translationally, the phosphoenolpyruvate-dependent sugar phosphotransferase system (PTS), including enzyme I, and histidine-containing protein (HPr) are required for the phosphorylation, which leads to the activation of the enzyme.

It carries out the reaction glycerol + ATP = sn-glycerol 3-phosphate + ADP + H(+). The protein operates within polyol metabolism; glycerol degradation via glycerol kinase pathway; sn-glycerol 3-phosphate from glycerol: step 1/1. With respect to regulation, activated by phosphorylation and inhibited by fructose 1,6-bisphosphate (FBP). Key enzyme in the regulation of glycerol uptake and metabolism. Catalyzes the phosphorylation of glycerol to yield sn-glycerol 3-phosphate. The protein is Glycerol kinase of Listeria innocua serovar 6a (strain ATCC BAA-680 / CLIP 11262).